The chain runs to 95 residues: Alpha-defensin 20 (95 aa).

A signal peptide spans 1-19; sequence MKTLVLLSALVLLAFQVQA. The propeptide occupies 20-58; sequence DPIQNTDEETNTEEQPGEEDQAVSVSFGDPEGSALHEKS. The tract at residues 22 to 57 is disordered; sequence IQNTDEETNTEEQPGEEDQAVSVSFGDPEGSALHEK. A compositionally biased stretch (acidic residues) spans 25–40; it reads TDEETNTEEQPGEEDQ. Disulfide bonds link cysteine 64/cysteine 89, cysteine 66/cysteine 81, and cysteine 71/cysteine 88.

It belongs to the alpha-defensin family.

The protein localises to the secreted. May have microbicidal activities. This chain is Alpha-defensin 20 (Defa20), found in Mus musculus (Mouse).